The primary structure comprises 92 residues: Small ribosomal subunit protein bS20 (92 aa).

The disordered stretch occupies residues Met1 to Ser23. Residues Ala7–His20 show a composition bias toward basic residues.

Belongs to the bacterial ribosomal protein bS20 family.

In terms of biological role, binds directly to 16S ribosomal RNA. The protein is Small ribosomal subunit protein bS20 of Pseudomonas fluorescens (strain SBW25).